Reading from the N-terminus, the 279-residue chain is Putative potassium channel regulatory protein (279 aa).

A BTB domain is found at Glu5 to Ser74. A disordered region spans residues Glu256–Arg279.

It localises to the endoplasmic reticulum. In terms of biological role, inhibits potassium fluxes in cells, possibly by retaining potassium channels in the cytoplasm. This chain is Putative potassium channel regulatory protein (kcnrg), found in Xenopus tropicalis (Western clawed frog).